A 325-amino-acid chain; its full sequence is Phospho-N-acetylmuramoyl-pentapeptide-transferase (325 aa).

10 helical membrane passes run 9 to 29 (ALLV…PWLL), 53 to 73 (TMGG…FQAF), 77 to 97 (TLLL…DDYL), 112 to 132 (KLLG…AFLG), 154 to 174 (LGNV…ANAV), 182 to 202 (GLCS…SLAL), 204 to 224 (EKGL…FLVY), 231 to 251 (VFMG…FAVL), 257 to 277 (FLLL…IQVI), and 305 to 325 (KIVL…GYGL).

It belongs to the glycosyltransferase 4 family. MraY subfamily. Mg(2+) is required as a cofactor.

The protein resides in the cell membrane. The enzyme catalyses UDP-N-acetyl-alpha-D-muramoyl-L-alanyl-gamma-D-glutamyl-meso-2,6-diaminopimeloyl-D-alanyl-D-alanine + di-trans,octa-cis-undecaprenyl phosphate = di-trans,octa-cis-undecaprenyl diphospho-N-acetyl-alpha-D-muramoyl-L-alanyl-D-glutamyl-meso-2,6-diaminopimeloyl-D-alanyl-D-alanine + UMP. The protein operates within cell wall biogenesis; peptidoglycan biosynthesis. Its function is as follows. Catalyzes the initial step of the lipid cycle reactions in the biosynthesis of the cell wall peptidoglycan: transfers peptidoglycan precursor phospho-MurNAc-pentapeptide from UDP-MurNAc-pentapeptide onto the lipid carrier undecaprenyl phosphate, yielding undecaprenyl-pyrophosphoryl-MurNAc-pentapeptide, known as lipid I. The polypeptide is Phospho-N-acetylmuramoyl-pentapeptide-transferase (Carboxydothermus hydrogenoformans (strain ATCC BAA-161 / DSM 6008 / Z-2901)).